Consider the following 125-residue polypeptide: Glycine cleavage system H protein (125 aa).

Residues 21-103 enclose the Lipoyl-binding domain; that stretch reads SVTIGISNQA…YSAGWIVKIK (83 aa). An N6-lipoyllysine modification is found at Lys-62.

Belongs to the GcvH family. The glycine cleavage system is composed of four proteins: P, T, L and H. (R)-lipoate is required as a cofactor.

In terms of biological role, the glycine cleavage system catalyzes the degradation of glycine. The H protein shuttles the methylamine group of glycine from the P protein to the T protein. The polypeptide is Glycine cleavage system H protein (Psychromonas ingrahamii (strain DSM 17664 / CCUG 51855 / 37)).